The primary structure comprises 95 residues: Small ribosomal subunit protein bS6 (95 aa).

The protein belongs to the bacterial ribosomal protein bS6 family.

Functionally, binds together with bS18 to 16S ribosomal RNA. The sequence is that of Small ribosomal subunit protein bS6 from Corynebacterium glutamicum (strain ATCC 13032 / DSM 20300 / JCM 1318 / BCRC 11384 / CCUG 27702 / LMG 3730 / NBRC 12168 / NCIMB 10025 / NRRL B-2784 / 534).